We begin with the raw amino-acid sequence, 140 residues long: Large ribosomal subunit protein uL11 (140 aa).

It belongs to the universal ribosomal protein uL11 family. As to quaternary structure, part of the ribosomal stalk of the 50S ribosomal subunit. Interacts with L10 and the large rRNA to form the base of the stalk. L10 forms an elongated spine to which L12 dimers bind in a sequential fashion forming a multimeric L10(L12)X complex. Post-translationally, one or more lysine residues are methylated.

In terms of biological role, forms part of the ribosomal stalk which helps the ribosome interact with GTP-bound translation factors. This is Large ribosomal subunit protein uL11 from Nitratidesulfovibrio vulgaris (strain ATCC 29579 / DSM 644 / CCUG 34227 / NCIMB 8303 / VKM B-1760 / Hildenborough) (Desulfovibrio vulgaris).